The primary structure comprises 118 residues: MGFSDNLNHMEKRKSGYVTQKQFSEFKDANNQRLIKIETTLATQGEQLNQLIKVVILQGEQIKELQVEQKAQGEQIKAKGEQIKAQSEQIKTQGETLKLILQALGGINKRLDKVDPPK.

It belongs to the UPF0134 family.

The protein is UPF0134 protein MPN_287 of Mycoplasma pneumoniae (strain ATCC 29342 / M129 / Subtype 1) (Mycoplasmoides pneumoniae).